Consider the following 725-residue polypeptide: Antigen peptide transporter 1 (725 aa).

Over 1–8 the chain is Cytoplasmic; that stretch reads MAAHAWPT. Residues 9–29 traverse the membrane as a helical segment; it reads AALLLLLVDWLLLRPVLPGIF. Over 30–38 the chain is Lumenal; the sequence is SLLVPEVPL. Residues 39–60 traverse the membrane as a helical segment; the sequence is LRVWAVGLSRWAILGLGVRGVL. Over 61–67 the chain is Cytoplasmic; that stretch reads GVTAGAR. Residues 68-88 traverse the membrane as a helical segment; the sequence is GWLAALQPLVAALGLALPGLA. Residues 89–110 are Lumenal-facing; that stretch reads SFRKLSAWGALREGDNAGLLHW. The chain crosses the membrane as a helical span at residues 111–131; sequence NSRLDAFVLSYVAALPAAALW. Residues 132–163 are Cytoplasmic-facing; it reads HKLGGFWAPSGHKGAGDMLCRMLGFLDSKKGR. Residues 164 to 184 traverse the membrane as a helical segment; that stretch reads LHLVLVLLILSCLGEMAIPFF. In terms of domain architecture, ABC transmembrane type-1 spans 164 to 447; sequence LHLVLVLLIL…LLSIYPSMQK (284 aa). Residues 185-204 lie on the Lumenal side of the membrane; the sequence is TGRITDWILQDKTAPSFARN. A helical membrane pass occupies residues 205–225; it reads MWLMCILTIASTVLEFAGDGI. Over 226 to 275 the chain is Cytoplasmic; that stretch reads YNITMGHMHSRVHGEVFRAVLHQETGFFLKNPTGSITSRVTEDTSNVCES. A helical transmembrane segment spans residues 276–296; the sequence is ISDKLNLFLWYLGRGLCLLAF. Over 297–305 the chain is Lumenal; that stretch reads MIWGSFYLT. The chain crosses the membrane as a helical span at residues 306-326; that stretch reads VVTLLSLPLLFLLPRRLGKVY. Over 327 to 395 the chain is Cytoplasmic; that stretch reads QSLAVKVQES…VTEVWTMSVS (69 aa). The part of the peptide-binding site stretch occupies residues 352–397; that stretch reads PTVRSFANEEGEAQKFRQKLEEMKPLNKKEALAYVTEVWTMSVSGM. A helical transmembrane segment spans residues 396-416; it reads GMLLKVGILYLGGQLVVRGAV. The Lumenal segment spans residues 417-420; it reads SSGN. A helical transmembrane segment spans residues 421-441; the sequence is LVSFVLYQLQFTRAVEVLLSI. A part of the peptide-binding site region spans residues 430 to 464; the sequence is QFTRAVEVLLSIYPSMQKSVGASEKIFEYLDRTPC. Topologically, residues 442–725 are cytoplasmic; sequence YPSMQKSVGA…MVEALAAPSD (284 aa). The 240-residue stretch at 480 to 719 folds into the ABC transporter domain; that stretch reads VKFQDVSFAY…GGCYRSMVEA (240 aa). Residues 515–523, 618–624, and Gln678 contribute to the ATP site; these read GPNGSGKST and NQLSGGQ. Ser522 contributes to the Mg(2+) binding site.

This sequence belongs to the ABC transporter superfamily. ABCB family. MHC peptide exporter (TC 3.A.1.209) subfamily. As to quaternary structure, heterodimer of TAP1 and TAP2 (TAP1-TAP2). A component of the peptide loading complex (PLC), interacts via TAPBP with MHCI heterodimer; this interaction mediates peptide-MHCI assembly. Interacts with PSMB5 and PSMB8. Mg(2+) is required as a cofactor.

It is found in the endoplasmic reticulum membrane. The enzyme catalyses a peptide antigen(in) + ATP + H2O = a peptide antigen(out) + ADP + phosphate + H(+). ABC transporter associated with antigen processing. In complex with TAP2 mediates unidirectional translocation of peptide antigens from cytosol to endoplasmic reticulum (ER) for loading onto MHC class I (MHCI) molecules. Uses the chemical energy of ATP to export peptides against the concentration gradient. During the transport cycle alternates between 'inward-facing' state with peptide binding site facing the cytosol to 'outward-facing' state with peptide binding site facing the ER lumen. Peptide antigen binding to ATP-loaded TAP1-TAP2 induces a switch to hydrolysis-competent 'outward-facing' conformation ready for peptide loading onto nascent MHCI molecules. Subsequently ATP hydrolysis resets the transporter to the 'inward facing' state for a new cycle. As a component of the peptide loading complex (PLC), acts as a molecular scaffold essential for peptide-MHCI assembly and antigen presentation. This Rattus norvegicus (Rat) protein is Antigen peptide transporter 1 (Tap1).